A 356-amino-acid chain; its full sequence is MSKIIDIKTSIVTIPLKRTFVTAVRSTNHIDAVVVELSLDNGNKGYGVAPATTAITGDTLQGMQYIISEIFAPVILSSNLSDYKQTLELAFKKVMFNSAAKMALDLAFHDLLAKQKNISVAKLLGAKNNIIETDVSISCGSVAETIQNIQNGVEANFTTIKVKTGADFNRDIQLLKSLDNEFSKNIKFRFDANQGWNISQTKQFIEELNKYSLNVEIIEQPVKYYDISAMREITKFSNIPIVADESVFDAKDAERVIDEQACNMINIKLAKSGGILEAQKIKKLADSVGIPCMVGCMMESPAGILATASFALAEGITVADLDPLDWVAKDLYSDYITFNEPNIIIKDNLKGFGFSF.

Position 161-163 (161-163 (KVK)) interacts with substrate. Residues Asp-191, Glu-219, and Asp-244 each contribute to the Mg(2+) site. Substrate-binding positions include Lys-268 and 320 to 322 (DLD).

This sequence belongs to the mandelate racemase/muconate lactonizing enzyme family. Mg(2+) is required as a cofactor.

The catalysed reaction is L-alanyl-L-glutamate = L-alanyl-D-glutamate. Functionally, dipeptide epimerase with a preference for substrates containing a Glu residue in the second position. Catalyzes the epimerization of L-Ala-L-Glu, L-Ser-L-Glu, L-Thr-L-Glu, L-Val-L-Glu, L-Gly-L-Glu and L-Thr-L-Glu (in vitro). May play a role in the metabolism of the murein peptide, of which L-Ala-D-Glu is a component. This Francisella tularensis subsp. novicida (strain U112) protein is L-Ala-D/L-Glu epimerase.